The chain runs to 1012 residues: Cellulose synthase-like protein D5 (1012 aa).

A disordered region spans residues 1-81 (MSVDYANYTV…ARVPAPSSNK (81 aa)). Low complexity predominate over residues 20–37 (PSGGAPPAAPSAGGARPG). Positions 57 to 69 (GGGDDGAKMDRRL) are enriched in basic and acidic residues. Transmembrane regions (helical) follow at residues 150 to 170 (ILSP…LFLV) and 180 to 200 (ALWL…SWLL). Residue aspartate 280 is part of the active site. The segment at 597–620 (PRQGSEAMPGAGGGRSGGGSVGGD) is disordered. Gly residues predominate over residues 606–618 (GAGGGRSGGGSVG). Aspartate 717 is a catalytic residue. The next 6 helical transmembrane spans lie at 799-819 (LFLI…QFIV), 825-845 (TFLS…LLEV), 871-891 (LAAV…SFTL), 914-934 (SLFI…VVGV), 948-968 (LLGG…FAKG), and 978-998 (TIVY…WITI).

It belongs to the glycosyltransferase 2 family. Plant cellulose synthase-like D subfamily.

It is found in the golgi apparatus membrane. Thought to be a Golgi-localized beta-glycan synthase that polymerize the backbones of noncellulosic polysaccharides (hemicelluloses) of plant cell wall. This is Cellulose synthase-like protein D5 (CSLD5) from Oryza sativa subsp. japonica (Rice).